Here is a 647-residue protein sequence, read N- to C-terminus: tRNA 5-methylaminomethyl-2-thiouridine biosynthesis bifunctional protein MnmC (647 aa).

A tRNA (mnm(5)s(2)U34)-methyltransferase region spans residues M1–S227. The FAD-dependent cmnm(5)s(2)U34 oxidoreductase stretch occupies residues V256 to K647.

This sequence in the N-terminal section; belongs to the methyltransferase superfamily. tRNA (mnm(5)s(2)U34)-methyltransferase family. It in the C-terminal section; belongs to the DAO family. FAD serves as cofactor.

The protein localises to the cytoplasm. The catalysed reaction is 5-aminomethyl-2-thiouridine(34) in tRNA + S-adenosyl-L-methionine = 5-methylaminomethyl-2-thiouridine(34) in tRNA + S-adenosyl-L-homocysteine + H(+). Its function is as follows. Catalyzes the last two steps in the biosynthesis of 5-methylaminomethyl-2-thiouridine (mnm(5)s(2)U) at the wobble position (U34) in tRNA. Catalyzes the FAD-dependent demodification of cmnm(5)s(2)U34 to nm(5)s(2)U34, followed by the transfer of a methyl group from S-adenosyl-L-methionine to nm(5)s(2)U34, to form mnm(5)s(2)U34. This Leptospira interrogans serogroup Icterohaemorrhagiae serovar copenhageni (strain Fiocruz L1-130) protein is tRNA 5-methylaminomethyl-2-thiouridine biosynthesis bifunctional protein MnmC.